The sequence spans 264 residues: Osteopontin (264 aa).

A signal peptide spans 1–16 (MKLAFLCLCFISIAAA). Disordered regions lie at residues 21 to 141 (KSRQ…RGDS) and 166 to 264 (IEDD…EVTR). Over residues 31–51 (SEEKYDPRSHHTHRYHQDHVD) the composition is skewed to basic and acidic residues. Positions 52-73 (SQSQEHLQQTQNDLASLQQTHY) are enriched in polar residues. The span at 97-118 (AVDDDDDDDNDSNDTDESDEVV) shows a compositional bias: acidic residues. Residues Asn-106 and Asn-109 are each glycosylated (N-linked (GlcNAc...) asparagine). The Cell attachment site signature appears at 132-134 (RGD). The segment covering 186 to 212 (KESREQDSRELAQHQSVENDSRPRFDS) has biased composition (basic and acidic residues). N-linked (GlcNAc...) asparagine glycosylation is found at Asn-204 and Asn-242. The segment covering 233-246 (ASRSAVDTSNQTLE) has biased composition (polar residues). A compositionally biased stretch (basic and acidic residues) spans 252–264 (EDRHSIENNEVTR).

It belongs to the osteopontin family. Post-translationally, extensively phosphorylated on serine residues.

It localises to the secreted. Functionally, major non-collagenous bone protein that binds tightly to hydroxyapatite. Appears to form an integral part of the mineralized matrix. Probably important to cell-matrix interaction. Acts as a cytokine involved in enhancing production of interferon-gamma and interleukin-12 and reducing production of interleukin-10 and is essential in the pathway that leads to type I immunity. This chain is Osteopontin (SPP1), found in Gallus gallus (Chicken).